Consider the following 311-residue polypeptide: CD-NTase-associated protein 12 (311 aa).

A TIR domain is found at 4 to 121 (RIFIGSSKEG…LLGITVPQFE (118 aa)). Residues 157–311 (STVLAIGYFY…RNIVKIIQEE (155 aa)) are STING domain. 3 residues coordinate 3',3'-c-di-GMP: F168, P232, and D249.

This sequence in the C-terminal section; belongs to the bacterial STING family. Forms homodimers; in the presence of c-di-GMP forms filaments with an ordered array of parallel-stacked subunits.

It catalyses the reaction NAD(+) + H2O = ADP-D-ribose + nicotinamide + H(+). Its activity is regulated as follows. NAD(+) hydrolase activity is strongly stimulated by c-di-GMP, weakly by 3'3'-cGAMP, very weakly by c-di-AMP but not at all by 2'3'-cGAMP. Self-association of TIR domains is required for NADase activity. Functionally, effector protein of a CBASS antiviral system with NAD(+) hydrolase activity. CBASS (cyclic oligonucleotide-based antiphage signaling system) provides immunity against bacteriophage. The CD-NTase protein synthesizes cyclic nucleotides in response to infection; these serve as specific second messenger signals. The signals activate a diverse range of effectors, leading to bacterial cell death and thus abortive phage infection. A type I-D CBASS(GG) system. Its function is as follows. Binds c-di-GMP, does not bind cUMP-AMP. Upon activation by c-di-GMP forms filaments which hydrolyze NAD(+); filament formation is required for enzyme activation. In Flavobacterium daejeonense, this protein is CD-NTase-associated protein 12.